A 225-amino-acid chain; its full sequence is uncharacterized protein (225 aa).

The helical transmembrane segment at 2-22 (TIFYLVFIAVIIIIILYVLYL) threads the bilayer. N-linked (GlcNAc...) asparagine; by host glycosylation occurs at Asn-73. The stretch at 114 to 146 (DYEDNYFNSNWNLKQLKNQLENLLREKNYKMVL) forms a coiled coil. Asn-222 carries N-linked (GlcNAc...) asparagine; by host glycosylation.

It localises to the membrane. This is an uncharacterized protein from Acanthamoeba polyphaga (Amoeba).